The chain runs to 122 residues: Small ribosomal subunit protein uS13 (122 aa).

The segment at 93–122 (RLSLPVRGQRTKTNSRTRKGKRKTVAGKKK) is disordered. The span at 101–122 (QRTKTNSRTRKGKRKTVAGKKK) shows a compositional bias: basic residues.

It belongs to the universal ribosomal protein uS13 family. Part of the 30S ribosomal subunit. Forms a loose heterodimer with protein S19. Forms two bridges to the 50S subunit in the 70S ribosome.

Functionally, located at the top of the head of the 30S subunit, it contacts several helices of the 16S rRNA. In the 70S ribosome it contacts the 23S rRNA (bridge B1a) and protein L5 of the 50S subunit (bridge B1b), connecting the 2 subunits; these bridges are implicated in subunit movement. Contacts the tRNAs in the A and P-sites. The protein is Small ribosomal subunit protein uS13 of Chlamydia caviae (strain ATCC VR-813 / DSM 19441 / 03DC25 / GPIC) (Chlamydophila caviae).